Consider the following 370-residue polypeptide: Phosphoribosylformylglycinamidine cyclo-ligase (370 aa).

Belongs to the AIR synthase family.

Its subcellular location is the cytoplasm. The catalysed reaction is 2-formamido-N(1)-(5-O-phospho-beta-D-ribosyl)acetamidine + ATP = 5-amino-1-(5-phospho-beta-D-ribosyl)imidazole + ADP + phosphate + H(+). The protein operates within purine metabolism; IMP biosynthesis via de novo pathway; 5-amino-1-(5-phospho-D-ribosyl)imidazole from N(2)-formyl-N(1)-(5-phospho-D-ribosyl)glycinamide: step 2/2. The protein is Phosphoribosylformylglycinamidine cyclo-ligase of Rhodospirillum rubrum (strain ATCC 11170 / ATH 1.1.1 / DSM 467 / LMG 4362 / NCIMB 8255 / S1).